We begin with the raw amino-acid sequence, 113 residues long: Large ribosomal subunit protein bL17 (113 aa).

It belongs to the bacterial ribosomal protein bL17 family. In terms of assembly, part of the 50S ribosomal subunit. Contacts protein L32.

The sequence is that of Large ribosomal subunit protein bL17 from Syntrophomonas wolfei subsp. wolfei (strain DSM 2245B / Goettingen).